The primary structure comprises 444 residues: Deoxyguanosinetriphosphate triphosphohydrolase-like protein (444 aa).

The HD domain occupies 59–250; sequence RLTHSLEVSQ…MELADDIAYA (192 aa).

The protein belongs to the dGTPase family. Type 2 subfamily.

The polypeptide is Deoxyguanosinetriphosphate triphosphohydrolase-like protein (Shewanella halifaxensis (strain HAW-EB4)).